The primary structure comprises 349 residues: MGNRVICMKKKDVVIRSGGDGSRSKRVNRSQRKLLADEENLHRRALSMAIHQAQVSQRFDGSMSRRIGSTSSRRGTLSDSFSNNKQVPEFLESLKVKKFVLVHGEGFGAWCWYKTIASLEESGLSPVTVDLAGSGFNMTDANSVSTLEEYSKPLIELIQNLPAEEKVILVGHSTGGACVSYALERFPEKISKAIFICATMVTDGQRPFDVFADELGSAERFMKESQFLIYGNGKDNPATGFMFEKQHMKGLYFNQSPNKDIALSMISMRPVPLGPMMEKLSLSAERYGKGRRFYVQTLDDLALSPDVQEKLVRENSPEAVFKIKGSDHCPFFSKPQSLHKILLEIAQIP.

A chloroplast-targeting transit peptide spans 1–77 (MGNRVICMKK…GSTSSRRGTL (77 aa)). A disordered region spans residues 61-80 (GSMSRRIGSTSSRRGTLSDS). S173 (acyl-ester intermediate) is an active-site residue. Active-site charge relay system residues include D300 and H328.

The protein belongs to the AB hydrolase superfamily. Methylesterase family.

It localises to the plastid. Its subcellular location is the chloroplast. Functionally, putative methylesterase. This Arabidopsis thaliana (Mouse-ear cress) protein is Putative methylesterase 12, chloroplastic.